A 102-amino-acid polypeptide reads, in one-letter code: RNA-binding protein Hfq (102 aa).

Positions 9–68 (DPFLNALRRERVPVSIYLVNGIKLQGQIESFDQFVILLKNTVSQMVYKHAISTVVPSRPV) constitute a Sm domain. Positions 63-102 (VPSRPVSHHSNNAGGGTSNNYHHGSNAQGSGAQQDSEETE) are disordered. Positions 70–96 (HHSNNAGGGTSNNYHHGSNAQGSGAQQ) are enriched in polar residues.

The protein belongs to the Hfq family. In terms of assembly, homohexamer.

In terms of biological role, RNA chaperone that binds small regulatory RNA (sRNAs) and mRNAs to facilitate mRNA translational regulation in response to envelope stress, environmental stress and changes in metabolite concentrations. Also binds with high specificity to tRNAs. This Salmonella arizonae (strain ATCC BAA-731 / CDC346-86 / RSK2980) protein is RNA-binding protein Hfq.